The chain runs to 475 residues: Exodeoxyribonuclease 7 large subunit (475 aa).

This sequence belongs to the XseA family. As to quaternary structure, heterooligomer composed of large and small subunits.

It is found in the cytoplasm. The enzyme catalyses Exonucleolytic cleavage in either 5'- to 3'- or 3'- to 5'-direction to yield nucleoside 5'-phosphates.. Its function is as follows. Bidirectionally degrades single-stranded DNA into large acid-insoluble oligonucleotides, which are then degraded further into small acid-soluble oligonucleotides. The polypeptide is Exodeoxyribonuclease 7 large subunit (Bartonella henselae (strain ATCC 49882 / DSM 28221 / CCUG 30454 / Houston 1) (Rochalimaea henselae)).